The chain runs to 95 residues: UPF0213 protein YPA_2977 (95 aa).

The region spanning 4–79 (SLWHLYLLRT…KQLSKQQKEK (76 aa)) is the GIY-YIG domain.

This sequence belongs to the UPF0213 family.

The protein is UPF0213 protein YPA_2977 of Yersinia pestis bv. Antiqua (strain Antiqua).